Consider the following 169-residue polypeptide: Transcription antitermination protein NusB (169 aa).

Residues 1–19 (MAEMKKTIDNKPAPKGEKK) are compositionally biased toward basic and acidic residues. A disordered region spans residues 1-22 (MAEMKKTIDNKPAPKGEKKANR).

The protein belongs to the NusB family.

Functionally, involved in transcription antitermination. Required for transcription of ribosomal RNA (rRNA) genes. Binds specifically to the boxA antiterminator sequence of the ribosomal RNA (rrn) operons. The polypeptide is Transcription antitermination protein NusB (Rhodopseudomonas palustris (strain BisB18)).